The sequence spans 359 residues: Aromatic amino acid aminotransferase (359 aa).

Lys223 bears the N6-(pyridoxal phosphate)lysine mark.

The protein belongs to the class-II pyridoxal-phosphate-dependent aminotransferase family. Homodimer. Pyridoxal 5'-phosphate is required as a cofactor.

It catalyses the reaction an aromatic L-alpha-amino acid + 2-oxoglutarate = an aromatic oxo-acid + L-glutamate. Aminotransferase that catalyzes the conversion of aromatic amino acids and 2-oxoglutarate into corresponding aromatic oxo acids and L-glutamate. In Streptomyces avermitilis (strain ATCC 31267 / DSM 46492 / JCM 5070 / NBRC 14893 / NCIMB 12804 / NRRL 8165 / MA-4680), this protein is Aromatic amino acid aminotransferase.